The sequence spans 303 residues: MLWFKNLMVYRLSREVSLSADEMEKQLSAFSFTPCGSQDMAKTGWVSPMGSHSDALTHTVNGQIVICARKEEKILPSPVIKQELQDKIERLEGEQHRKLKKTEKDSLKDEVLHSLLPRAFSRFNQTFLWIDTVNDLIMVDAASAKRAEDTLALLRKSLGSLPVVPLTLENPIELTLTEWVRSKTLPAGFALMDEAELKAILEDGGVIRCKKQDLFSDEIAVHIEAGKLVTKLALDWQERIQLVLSDDGSLKRLKFADTLRDQNEDIDREDFAQRFDADFILMTSELAALIKNLIEALGGEAQH.

It belongs to the RdgC family.

It localises to the cytoplasm. It is found in the nucleoid. Its function is as follows. May be involved in recombination. The chain is Recombination-associated protein RdgC from Yersinia pseudotuberculosis serotype O:1b (strain IP 31758).